A 293-amino-acid polypeptide reads, in one-letter code: Mediator of RNA polymerase II transcription subunit 27 (293 aa).

This sequence belongs to the Mediator complex subunit 27 family. Component of the Mediator complex, which includes at least CDK8, MED4, MED6, MED11, MED14, MED17, MED18, MED20, MED21, MED22, MED27, MED28, MED30 and MED31.

It localises to the nucleus. Functionally, component of the Mediator complex, a coactivator involved in the regulated transcription of nearly all RNA polymerase II-dependent genes. Mediator functions as a bridge to convey information from gene-specific regulatory proteins to the basal RNA polymerase II transcription machinery. Mediator is recruited to promoters by direct interactions with regulatory proteins and serves as a scaffold for the assembly of a functional preinitiation complex with RNA polymerase II and the general transcription factors. Required for activated transcription of the MtnA gene. This chain is Mediator of RNA polymerase II transcription subunit 27 (MED27), found in Drosophila melanogaster (Fruit fly).